The following is a 593-amino-acid chain: MGEALRGLKRTIMCGEPRENNIGEKVTVMGWVQRKRNLGGLIFVDLRDRTGIMQIVFGEEINKEAFEKSDNVKSEYCIAVTGEIVKRQSPNNDMETGAVELKGEDIKILSESETPPIYIKEGLDASENVRLKYRYLDLRRPDMQKIFMIRHKTCKVVRDFLDENGFLEMETPILTKSTPEGARDYLVPSRNYKGMFYALPQSPQIFKQLLMVSGYDKYFQITKCFRDEDLRANRQPEFTQIDMELSFVEEDDVIDLNEKLLAKVFKEVAGIDVKLPIERMPYKIAMEKYGSDKPDLRFGMEINDLTEAVKNSEFKVFKGAIEAGGSVRAIKAENCATMGRKQIDKLQDFVKTYKAKGLAWIAYKEDEIKSPIAKFLTEEEMKAILEKMDAKVGDLILIVADKNNVVFESLGALRLHLAKELDIINKDEFRFVWITEFPLLAYNEEEGRYQAEHHPFTAIMDEDIDLLDTDPGKVRAKAYDIVLNGEELGGGSIRIHDSKLQEKMFSVLGFTKEKAWERFGFLLEAFKFGPPPHGGLAYGLDRMIMFLAGTENIKDVITFPKNQNAFCPLTEAPNVVDENQLEELGIKKIEKED.

Residue E180 coordinates L-aspartate. An aspartate region spans residues 204-207 (QIFK). R226 provides a ligand contact to L-aspartate. ATP-binding positions include 226–228 (RDE) and Q235. H453 serves as a coordination point for L-aspartate. Residue E487 participates in ATP binding. L-aspartate is bound at residue R494. Residue 539–542 (GLDR) coordinates ATP.

Belongs to the class-II aminoacyl-tRNA synthetase family. Type 1 subfamily. Homodimer.

It is found in the cytoplasm. The enzyme catalyses tRNA(Asp) + L-aspartate + ATP = L-aspartyl-tRNA(Asp) + AMP + diphosphate. Its function is as follows. Catalyzes the attachment of L-aspartate to tRNA(Asp) in a two-step reaction: L-aspartate is first activated by ATP to form Asp-AMP and then transferred to the acceptor end of tRNA(Asp). The polypeptide is Aspartate--tRNA ligase (Clostridium botulinum (strain Kyoto / Type A2)).